The sequence spans 101 residues: Small ribosomal subunit protein uS14 (101 aa).

This sequence belongs to the universal ribosomal protein uS14 family. As to quaternary structure, part of the 30S ribosomal subunit. Contacts proteins S3 and S10.

Functionally, binds 16S rRNA, required for the assembly of 30S particles and may also be responsible for determining the conformation of the 16S rRNA at the A site. This chain is Small ribosomal subunit protein uS14, found in Chlamydia trachomatis serovar L2 (strain ATCC VR-902B / DSM 19102 / 434/Bu).